The primary structure comprises 113 residues: U11-theraphotoxin-Hhn1o (113 aa).

The N-terminal stretch at 1–21 (MNTVRVTFLLVFVLAVSLGQA) is a signal peptide. A propeptide spanning residues 22–74 (DKDENRMEMQEKTEQGKSYLDFAENLLLQKLEELEAKLLEEDSEESRNSRQKR) is cleaved from the precursor. The disordered stretch occupies residues 61-83 (EEDSEESRNSRQKRCIGEGVPCD). Disulfide bonds link C75–C90 and C82–C95.

The protein belongs to the neurotoxin 14 (magi-1) family. 01 (HNTX-16) subfamily. Expressed by the venom gland.

The protein resides in the secreted. Probable ion channel inhibitor. This Cyriopagopus hainanus (Chinese bird spider) protein is U11-theraphotoxin-Hhn1o.